The primary structure comprises 372 residues: MFDFQINAHCSHTRARVGCFRTPHGSVNTPRFMPVGTLATVKGITATQLADTGAQMVLANTYHLHLQPGEGIVADAGGLHRFMGWDRPLLTDSGGFQIFSLADLNRIDDHGVVFRNPRNGSQIELTPERAIEIQMALGADVAMAFDQCPPYPASESDVEAACKRTHAWLERCSNTHQLTNQALFGIVQGGCFPHLREQSAQIVASFDLPGIAIGGVSVGEPVEDIHRIVRQVSPLLPQDRPRYLMGIGTLREIAIAVASGIDLFDCVLPTRLGRHGTALVAGERWNLRNARFREDHTPLDQSCTCTACRHHSRAYLHHLIRNEELLGLTLLSLHNLTQLIRFTSAISQAIQDDCFSEDFAPWQPDSAAHHTW.

D92 serves as the catalytic Proton acceptor. Residues 92–96 (DSGGF), D146, Q188, and G215 contribute to the substrate site. Positions 246–252 (GIGTLRE) are RNA binding. Residue D265 is the Nucleophile of the active site. The tract at residues 270-274 (TRLGR) is RNA binding; important for wobble base 34 recognition. Zn(2+) is bound by residues C303, C305, C308, and H334.

The protein belongs to the queuine tRNA-ribosyltransferase family. As to quaternary structure, homodimer. Within each dimer, one monomer is responsible for RNA recognition and catalysis, while the other monomer binds to the replacement base PreQ1. Zn(2+) serves as cofactor.

The catalysed reaction is 7-aminomethyl-7-carbaguanine + guanosine(34) in tRNA = 7-aminomethyl-7-carbaguanosine(34) in tRNA + guanine. It participates in tRNA modification; tRNA-queuosine biosynthesis. In terms of biological role, catalyzes the base-exchange of a guanine (G) residue with the queuine precursor 7-aminomethyl-7-deazaguanine (PreQ1) at position 34 (anticodon wobble position) in tRNAs with GU(N) anticodons (tRNA-Asp, -Asn, -His and -Tyr). Catalysis occurs through a double-displacement mechanism. The nucleophile active site attacks the C1' of nucleotide 34 to detach the guanine base from the RNA, forming a covalent enzyme-RNA intermediate. The proton acceptor active site deprotonates the incoming PreQ1, allowing a nucleophilic attack on the C1' of the ribose to form the product. After dissociation, two additional enzymatic reactions on the tRNA convert PreQ1 to queuine (Q), resulting in the hypermodified nucleoside queuosine (7-(((4,5-cis-dihydroxy-2-cyclopenten-1-yl)amino)methyl)-7-deazaguanosine). In Prochlorococcus marinus (strain MIT 9303), this protein is Queuine tRNA-ribosyltransferase.